A 299-amino-acid chain; its full sequence is Xyloglucan endotransglucosylase protein 6 (299 aa).

Residues 1–25 (MASSLTLPMAMAFTLLALSFASAMG) form the signal peptide. The GH16 domain occupies 26 to 219 (GSMNSSRFDE…WSHAPFVASY (194 aa)). Residue E105 is the Nucleophile of the active site. The active-site Proton donor is the E109. A xyloglucan-binding site is contributed by E109. N113 carries N-linked (GlcNAc...) asparagine glycosylation. Xyloglucan contacts are provided by residues 122–124 (QTN), 132–134 (NRE), 198–199 (DW), and G203. Cystine bridges form between C227/C242 and C281/C294. Residue R286 participates in xyloglucan binding.

This sequence belongs to the glycosyl hydrolase 16 family. XTH group 1 subfamily. Contains at least one intrachain disulfide bond essential for its enzymatic activity. In terms of tissue distribution, highest expression in ripe leaves after full expansion. Also expressed in fruits, and at a lower level in flowers and stems (picked at anthesis).

It is found in the secreted. The protein localises to the cell wall. It localises to the extracellular space. Its subcellular location is the apoplast. The enzyme catalyses breaks a beta-(1-&gt;4) bond in the backbone of a xyloglucan and transfers the xyloglucanyl segment on to O-4 of the non-reducing terminal glucose residue of an acceptor, which can be a xyloglucan or an oligosaccharide of xyloglucan.. Its function is as follows. Catalyzes xyloglucan endotransglycosylation (XET). Cleaves and religates xyloglucan polymers. Does not catalyze xyloglucan endohydrolysis (XEH). Probably involved in cell wall restructuring during postharvest fruit softening. This chain is Xyloglucan endotransglucosylase protein 6, found in Diospyros kaki (Kaki persimmon).